Here is a 241-residue protein sequence, read N- to C-terminus: Ribonuclease 3 (241 aa).

In terms of domain architecture, RNase III spans 8–137 (LTLLKNRLGI…LLGAVYLDQG (130 aa)). Residue Glu50 coordinates Mg(2+). Residue Asp54 is part of the active site. Mg(2+) is bound by residues Asp123 and Glu126. The active site involves Glu126. The region spanning 164-233 (DYKTELQELV…AKKALMKSDL (70 aa)) is the DRBM domain. Residues 214–241 (RSKKEAEQQAAKKALMKSDLGSACNHKK) are disordered.

It belongs to the ribonuclease III family. In terms of assembly, homodimer. It depends on Mg(2+) as a cofactor.

It localises to the cytoplasm. It catalyses the reaction Endonucleolytic cleavage to 5'-phosphomonoester.. Its function is as follows. Digests double-stranded RNA. Involved in the processing of primary rRNA transcript to yield the immediate precursors to the large and small rRNAs (23S and 16S). Processes some mRNAs, and tRNAs when they are encoded in the rRNA operon. Processes pre-crRNA and tracrRNA of type II CRISPR loci if present in the organism. The protein is Ribonuclease 3 of Pelotomaculum thermopropionicum (strain DSM 13744 / JCM 10971 / SI).